Reading from the N-terminus, the 387-residue chain is Lipid-A-disaccharide synthase (387 aa).

The protein belongs to the LpxB family.

It catalyses the reaction a lipid X + a UDP-2-N,3-O-bis[(3R)-3-hydroxyacyl]-alpha-D-glucosamine = a lipid A disaccharide + UDP + H(+). It participates in bacterial outer membrane biogenesis; LPS lipid A biosynthesis. Functionally, condensation of UDP-2,3-diacylglucosamine and 2,3-diacylglucosamine-1-phosphate to form lipid A disaccharide, a precursor of lipid A, a phosphorylated glycolipid that anchors the lipopolysaccharide to the outer membrane of the cell. This chain is Lipid-A-disaccharide synthase, found in Nitrosococcus oceani (strain ATCC 19707 / BCRC 17464 / JCM 30415 / NCIMB 11848 / C-107).